A 355-amino-acid chain; its full sequence is Anthranilate phosphoribosyltransferase (355 aa).

Residues G99, 102–103, T107, 109–112, 127–135, and S139 contribute to the 5-phospho-alpha-D-ribose 1-diphosphate site; these read GD, NIST, and KHGNRSVSS. An anthranilate-binding site is contributed by G99. S111 lines the Mg(2+) pocket. N130 serves as a coordination point for anthranilate. Residue R185 coordinates anthranilate. D243 and E244 together coordinate Mg(2+).

This sequence belongs to the anthranilate phosphoribosyltransferase family. As to quaternary structure, homodimer. The cofactor is Mg(2+).

The enzyme catalyses N-(5-phospho-beta-D-ribosyl)anthranilate + diphosphate = 5-phospho-alpha-D-ribose 1-diphosphate + anthranilate. It participates in amino-acid biosynthesis; L-tryptophan biosynthesis; L-tryptophan from chorismate: step 2/5. Catalyzes the transfer of the phosphoribosyl group of 5-phosphorylribose-1-pyrophosphate (PRPP) to anthranilate to yield N-(5'-phosphoribosyl)-anthranilate (PRA). The protein is Anthranilate phosphoribosyltransferase of Pseudoalteromonas translucida (strain TAC 125).